The sequence spans 524 residues: Phosphoenolpyruvate carboxykinase (ATP) (524 aa).

Substrate-binding residues include Arg-52, Tyr-188, and Lys-194. Residues Lys-194, His-213, and 229-237 contribute to the ATP site; that span reads GLSGTGKTT. Positions 194 and 213 each coordinate Mn(2+). Asp-250 is a binding site for Mn(2+). Glu-278, Arg-314, and Thr-439 together coordinate ATP. Position 314 (Arg-314) interacts with substrate.

Belongs to the phosphoenolpyruvate carboxykinase (ATP) family. Mn(2+) serves as cofactor.

The protein resides in the cytoplasm. It catalyses the reaction oxaloacetate + ATP = phosphoenolpyruvate + ADP + CO2. It participates in carbohydrate biosynthesis; gluconeogenesis. Functionally, involved in the gluconeogenesis. Catalyzes the conversion of oxaloacetate (OAA) to phosphoenolpyruvate (PEP) through direct phosphoryl transfer between the nucleoside triphosphate and OAA. This Campylobacter jejuni subsp. jejuni serotype O:23/36 (strain 81-176) protein is Phosphoenolpyruvate carboxykinase (ATP).